A 346-amino-acid polypeptide reads, in one-letter code: Protein RecA (346 aa).

65–72 provides a ligand contact to ATP; it reads GPESSGKT.

It belongs to the RecA family.

The protein resides in the cytoplasm. In terms of biological role, can catalyze the hydrolysis of ATP in the presence of single-stranded DNA, the ATP-dependent uptake of single-stranded DNA by duplex DNA, and the ATP-dependent hybridization of homologous single-stranded DNAs. It interacts with LexA causing its activation and leading to its autocatalytic cleavage. In Pseudomonas aeruginosa (strain UCBPP-PA14), this protein is Protein RecA.